A 210-amino-acid polypeptide reads, in one-letter code: Transposable element activator uncharacterized 23 kDa protein (210 aa).

Positions 67–78 (SGRMGGPRRDGR) are enriched in basic and acidic residues. Positions 67-87 (SGRMGGPRRDGRVASSGVEGG) are disordered.

The sequence is that of Transposable element activator uncharacterized 23 kDa protein from Zea mays (Maize).